The chain runs to 141 residues: Hemoglobin subunit alpha-1/2 (141 aa).

The region spanning 1-141 is the Globin domain; that stretch reads VLSPADKTNV…VSTVLTSKYR (141 aa). The residue at position 3 (S3) is a Phosphoserine. Residue K7 is modified to N6-succinyllysine. Phosphothreonine is present on T8. At K11 the chain carries N6-succinyllysine. N6-acetyllysine; alternate is present on K16. Residue K16 is modified to N6-succinyllysine; alternate. At Y24 the chain carries Phosphotyrosine. K40 is subject to N6-succinyllysine. S49 bears the Phosphoserine mark. O2 is bound at residue H58. Position 87 (H87) interacts with heme b. S102 carries the phosphoserine modification. Position 108 is a phosphothreonine (T108). Position 124 is a phosphoserine (S124). Residues T134 and T137 each carry the phosphothreonine modification. Position 138 is a phosphoserine (S138).

Belongs to the globin family. Heterotetramer of two alpha chains and two beta chains. As to expression, red blood cells.

In terms of biological role, involved in oxygen transport from the lung to the various peripheral tissues. This chain is Hemoglobin subunit alpha-1/2, found in Leptonychotes weddellii (Weddell seal).